The chain runs to 367 residues: Glutamate 5-kinase (367 aa).

Lys-10 is an ATP binding site. Ser-50, Asp-137, and Asn-149 together coordinate substrate. Residues 169 to 170 (TD) and 211 to 217 (TGGMGTK) contribute to the ATP site. One can recognise a PUA domain in the interval 275 to 353 (AGEITVDAGA…QQIDAILGYE (79 aa)).

Belongs to the glutamate 5-kinase family.

The protein localises to the cytoplasm. It carries out the reaction L-glutamate + ATP = L-glutamyl 5-phosphate + ADP. Its pathway is amino-acid biosynthesis; L-proline biosynthesis; L-glutamate 5-semialdehyde from L-glutamate: step 1/2. Catalyzes the transfer of a phosphate group to glutamate to form L-glutamate 5-phosphate. This chain is Glutamate 5-kinase, found in Klebsiella pneumoniae subsp. pneumoniae (strain ATCC 700721 / MGH 78578).